The sequence spans 311 residues: Acetyl-coenzyme A carboxylase carboxyl transferase subunit alpha (311 aa).

Positions 36 to 286 (NLEKETQKVY…SDYVLKAIEE (251 aa)) constitute a CoA carboxyltransferase C-terminal domain.

The protein belongs to the AccA family. Acetyl-CoA carboxylase is a heterohexamer composed of biotin carboxyl carrier protein (AccB), biotin carboxylase (AccC) and two subunits each of ACCase subunit alpha (AccA) and ACCase subunit beta (AccD).

It localises to the cytoplasm. It carries out the reaction N(6)-carboxybiotinyl-L-lysyl-[protein] + acetyl-CoA = N(6)-biotinyl-L-lysyl-[protein] + malonyl-CoA. Its pathway is lipid metabolism; malonyl-CoA biosynthesis; malonyl-CoA from acetyl-CoA: step 1/1. Functionally, component of the acetyl coenzyme A carboxylase (ACC) complex. First, biotin carboxylase catalyzes the carboxylation of biotin on its carrier protein (BCCP) and then the CO(2) group is transferred by the carboxyltransferase to acetyl-CoA to form malonyl-CoA. This is Acetyl-coenzyme A carboxylase carboxyl transferase subunit alpha from Campylobacter lari (strain RM2100 / D67 / ATCC BAA-1060).